The following is a 196-amino-acid chain: MPIGVPKVPFRSPGEEDASWVDVYNRLYRERLLFLGQGINSEISNQLIGLMVYLSIEDETKELYLFINSPGGWVIPGIAIYDTMQFVRPDVHTVCMGLAASMGSFILVGGEITKRLAFPHARVMMHQPASGYYEAQTGEFVLEAEELLKLRETLTRVYVQRTGKPLWVVSEDMEKDVFMSATEAQAYGIVDLVAVE.

The active-site Nucleophile is Ser-101. His-126 is an active-site residue.

It belongs to the peptidase S14 family. Component of the chloroplastic Clp protease core complex.

It is found in the plastid. The protein localises to the chloroplast stroma. The enzyme catalyses Hydrolysis of proteins to small peptides in the presence of ATP and magnesium. alpha-casein is the usual test substrate. In the absence of ATP, only oligopeptides shorter than five residues are hydrolyzed (such as succinyl-Leu-Tyr-|-NHMec, and Leu-Tyr-Leu-|-Tyr-Trp, in which cleavage of the -Tyr-|-Leu- and -Tyr-|-Trp bonds also occurs).. Cleaves peptides in various proteins in a process that requires ATP hydrolysis. Has a chymotrypsin-like activity. Plays a major role in the degradation of misfolded proteins. The polypeptide is ATP-dependent Clp protease proteolytic subunit (Atropa belladonna (Belladonna)).